The chain runs to 177 residues: Large ribosomal subunit protein uL6 (177 aa).

This sequence belongs to the universal ribosomal protein uL6 family. Part of the 50S ribosomal subunit.

In terms of biological role, this protein binds to the 23S rRNA, and is important in its secondary structure. It is located near the subunit interface in the base of the L7/L12 stalk, and near the tRNA binding site of the peptidyltransferase center. The polypeptide is Large ribosomal subunit protein uL6 (Ralstonia pickettii (strain 12J)).